Consider the following 425-residue polypeptide: Enolase (425 aa).

Gln-170 lines the (2R)-2-phosphoglycerate pocket. The active-site Proton donor is Glu-214. Positions 250, 291, and 317 each coordinate Mg(2+). Residues Lys-342, Arg-371, Ser-372, and Lys-393 each coordinate (2R)-2-phosphoglycerate. Lys-342 acts as the Proton acceptor in catalysis.

It belongs to the enolase family. The cofactor is Mg(2+).

It is found in the cytoplasm. Its subcellular location is the secreted. The protein resides in the cell surface. The catalysed reaction is (2R)-2-phosphoglycerate = phosphoenolpyruvate + H2O. The protein operates within carbohydrate degradation; glycolysis; pyruvate from D-glyceraldehyde 3-phosphate: step 4/5. In terms of biological role, catalyzes the reversible conversion of 2-phosphoglycerate (2-PG) into phosphoenolpyruvate (PEP). It is essential for the degradation of carbohydrates via glycolysis. The protein is Enolase of Methanococcoides burtonii (strain DSM 6242 / NBRC 107633 / OCM 468 / ACE-M).